We begin with the raw amino-acid sequence, 57 residues long: COP9 signalosome complex subunit 9 (57 aa).

Thr-26 bears the Phosphothreonine mark.

It belongs to the CSN9 family. As to quaternary structure, component of the CSN complex, composed of COPS1/GPS1, COPS2, COPS3, COPS4, COPS5, COPS6, COPS7 (COPS7A or COPS7B), COPS8 and COPS9. In the complex, it interacts directly with COPS3, COPS5 and COPS6.

It is found in the nucleus. It localises to the cytoplasm. Its subcellular location is the nucleoplasm. In terms of biological role, component of the COP9 signalosome complex (CSN), a complex involved in various cellular and developmental processes. The CSN complex is an essential regulator of the ubiquitin (Ubl) conjugation pathway by mediating the deneddylation of the cullin subunits of SCF-type E3 ligase complexes, leading to decrease the Ubl ligase activity of SCF-type complexes such as SCF, CSA or DDB2. The complex is also involved in phosphorylation of p53/TP53, c-jun/JUN, IkappaBalpha/NFKBIA, ITPK1 and IRF8/ICSBP, possibly via its association with CK2 and PKD kinases. CSN-dependent phosphorylation of TP53 and JUN promotes and protects degradation by the Ubl system, respectively. Plays a role in cell proliferation. This Mus musculus (Mouse) protein is COP9 signalosome complex subunit 9.